A 345-amino-acid polypeptide reads, in one-letter code: Ribosomal RNA small subunit methyltransferase H (345 aa).

S-adenosyl-L-methionine contacts are provided by residues Gly-47–Tyr-49, Asp-65, Phe-92, Asp-113, and Gln-120. The interval Glu-296–Arg-345 is disordered.

The protein belongs to the methyltransferase superfamily. RsmH family.

The protein resides in the cytoplasm. The enzyme catalyses cytidine(1402) in 16S rRNA + S-adenosyl-L-methionine = N(4)-methylcytidine(1402) in 16S rRNA + S-adenosyl-L-homocysteine + H(+). Its function is as follows. Specifically methylates the N4 position of cytidine in position 1402 (C1402) of 16S rRNA. The protein is Ribosomal RNA small subunit methyltransferase H of Xanthobacter autotrophicus (strain ATCC BAA-1158 / Py2).